An 879-amino-acid polypeptide reads, in one-letter code: DNA mismatch repair protein MutS (879 aa).

639–646 (GPNMGGKS) contributes to the ATP binding site.

It belongs to the DNA mismatch repair MutS family.

Functionally, this protein is involved in the repair of mismatches in DNA. It is possible that it carries out the mismatch recognition step. This protein has a weak ATPase activity. This is DNA mismatch repair protein MutS from Aromatoleum aromaticum (strain DSM 19018 / LMG 30748 / EbN1) (Azoarcus sp. (strain EbN1)).